Consider the following 119-residue polypeptide: Beta-2-microglobulin (119 aa).

The first 20 residues, 1 to 20, serve as a signal peptide directing secretion; that stretch reads MARFVVVPLLVLVSLFGLEA. The region spanning 25–114 is the Ig-like C1-type domain; the sequence is PKIQVYSRYP…VTFSTPKTVK (90 aa). Cys-45 and Cys-100 are oxidised to a cystine.

Belongs to the beta-2-microglobulin family. Heterodimer of an alpha chain and a beta chain. Beta-2-microglobulin is the beta-chain of major histocompatibility complex class I molecules.

It localises to the secreted. In terms of biological role, component of the class I major histocompatibility complex (MHC). Involved in the presentation of peptide antigens to the immune system. This is Beta-2-microglobulin (B2M) from Saguinus oedipus (Cotton-top tamarin).